The following is a 639-amino-acid chain: DNA gyrase subunit B (639 aa).

Residues 392–402 (QAEELTRRKSA) are compositionally biased toward basic and acidic residues. Residues 392 to 416 (QAEELTRRKSALESTSLPGKLADCQ) are disordered. Residues 423-537 (SELFIVEGDS…AGYVYAAQPP (115 aa)) form the Toprim domain. The Mg(2+) site is built by E429, D502, and D504. K624 participates in a covalent cross-link: Glycyl lysine isopeptide (Lys-Gly) (interchain with G-Cter in SAMP2).

The protein belongs to the type II topoisomerase GyrB family. As to quaternary structure, heterotetramer, composed of two GyrA and two GyrB chains. In the heterotetramer, GyrA contains the active site tyrosine that forms a transient covalent intermediate with DNA, while GyrB binds cofactors and catalyzes ATP hydrolysis. The cofactor is Mg(2+). It depends on Mn(2+) as a cofactor. Requires Ca(2+) as cofactor.

It is found in the cytoplasm. The catalysed reaction is ATP-dependent breakage, passage and rejoining of double-stranded DNA.. A type II topoisomerase that negatively supercoils closed circular double-stranded (ds) DNA in an ATP-dependent manner to modulate DNA topology and maintain chromosomes in an underwound state. Negative supercoiling favors strand separation, and DNA replication, transcription, recombination and repair, all of which involve strand separation. Also able to catalyze the interconversion of other topological isomers of dsDNA rings, including catenanes and knotted rings. Type II topoisomerases break and join 2 DNA strands simultaneously in an ATP-dependent manner. The protein is DNA gyrase subunit B of Haloferax volcanii (strain ATCC 29605 / DSM 3757 / JCM 8879 / NBRC 14742 / NCIMB 2012 / VKM B-1768 / DS2) (Halobacterium volcanii).